Reading from the N-terminus, the 309-residue chain is Metal ABC transporter substrate-binding lipoprotein FimA (309 aa).

Residues 1 to 20 (MKKIASVLALFVALLFGLLA) form the signal peptide. A lipid anchor (N-palmitoyl cysteine) is attached at C21. C21 is lipidated: S-diacylglycerol cysteine. 4 residues coordinate a divalent metal cation: H67, H139, E205, and D280.

The protein belongs to the bacterial solute-binding protein 9 family. Lipoprotein receptor antigen (Lrai) subfamily.

Its subcellular location is the cell membrane. Functionally, part of an ATP-binding cassette (ABC) transport system involved in metal import. Binds a metal with high affinity and specificity and delivers it to the membrane permease for translocation into the cytoplasm. Also acts as an adhesin which is involved on adherence to extracellular matrix. It is an important factor in pathogenesis and infection. May contribute to the formation and accumulation of dental plaque. This chain is Metal ABC transporter substrate-binding lipoprotein FimA (fimA), found in Streptococcus parasanguinis.